The primary structure comprises 560 residues: Chaperonin GroEL 2 (560 aa).

ATP contacts are provided by residues threonine 29 to proline 32, aspartate 86 to threonine 90, glycine 413, asparagine 478 to alanine 480, and aspartate 494.

It belongs to the chaperonin (HSP60) family. As to quaternary structure, forms a cylinder of 14 subunits composed of two heptameric rings stacked back-to-back. Interacts with the co-chaperonin GroES.

The protein resides in the cytoplasm. The enzyme catalyses ATP + H2O + a folded polypeptide = ADP + phosphate + an unfolded polypeptide.. Its function is as follows. Together with its co-chaperonin GroES, plays an essential role in assisting protein folding. The GroEL-GroES system forms a nano-cage that allows encapsulation of the non-native substrate proteins and provides a physical environment optimized to promote and accelerate protein folding. The polypeptide is Chaperonin GroEL 2 (Trichormus variabilis (strain ATCC 29413 / PCC 7937) (Anabaena variabilis)).